The following is a 481-amino-acid chain: Proline--tRNA ligase (481 aa).

It belongs to the class-II aminoacyl-tRNA synthetase family. ProS type 3 subfamily. Homodimer.

It localises to the cytoplasm. It carries out the reaction tRNA(Pro) + L-proline + ATP = L-prolyl-tRNA(Pro) + AMP + diphosphate. In terms of biological role, catalyzes the attachment of proline to tRNA(Pro) in a two-step reaction: proline is first activated by ATP to form Pro-AMP and then transferred to the acceptor end of tRNA(Pro). The chain is Proline--tRNA ligase from Chlorobium phaeovibrioides (strain DSM 265 / 1930) (Prosthecochloris vibrioformis (strain DSM 265)).